Here is a 372-residue protein sequence, read N- to C-terminus: Hydrogenase-1 small chain (372 aa).

Residues 1–45 (MNNEETFYQAMRRQGVTRRSFLKYCSLAATSLGLGAGMAPKIAWA) constitute a signal peptide (tat-type signal). Residues 46–326 (LENKPRIPVV…QMGTHSTADT (281 aa)) lie on the Periplasmic side of the membrane. C62, C65, C160, C194, H232, C235, C260, and C266 together coordinate [4Fe-4S] cluster. [3Fe-4S] cluster contacts are provided by C275, C294, and C297. The chain crosses the membrane as a helical span at residues 327–347 (VGLTALGVVAAAVGVHAVASA). Residues 347 to 372 (AVDQRRRHNQQPTETEHQPGNEDKQA) are disordered. At 348-372 (VDQRRRHNQQPTETEHQPGNEDKQA) the chain is on the cytoplasmic side. Residues 360–372 (ETEHQPGNEDKQA) show a composition bias toward basic and acidic residues.

Belongs to the [NiFe]/[NiFeSe] hydrogenase small subunit family. Heterodimer of a large and a small subunit. The cofactor is [4Fe-4S] cluster. It depends on [3Fe-4S] cluster as a cofactor. Predicted to be exported by the Tat system. The position of the signal peptide cleavage has not been experimentally proven.

The protein localises to the cell inner membrane. It carries out the reaction H2 + A = AH2. Its function is as follows. This is one of three E.coli hydrogenases synthesized in response to different physiological conditions. HYD1 is believed to have a role in hydrogen cycling during fermentative growth. The sequence is that of Hydrogenase-1 small chain (hyaA) from Escherichia coli O6:H1 (strain CFT073 / ATCC 700928 / UPEC).